Consider the following 342-residue polypeptide: Replication factor C subunit 3 (342 aa).

63–70 (GPPGTGKT) lines the ATP pocket.

The protein belongs to the activator 1 small subunits family. As to quaternary structure, heteropentamer of subunits rfc1, rfc2, rfc3, rfc4 and rfc5 that forms a complex (RFC) with PCNA in the presence of ATP. Two other complexes exist where rfc1 can be replaced by either ctf18 or elg1 to form the ctf18-RFC or the elg1-RFC complexes respectively.

The protein localises to the nucleus. The elongation of primed DNA templates by DNA polymerase delta and epsilon requires the action of the accessory proteins PCNA and activator 1. Subunit 3 binds ATP. Also involved in replication and DNA damage checkpoint controls, probably functioning as a checkpoint sensor. The polypeptide is Replication factor C subunit 3 (rfc3) (Schizosaccharomyces pombe (strain 972 / ATCC 24843) (Fission yeast)).